We begin with the raw amino-acid sequence, 223 residues long: Putative protein phosphatase 2C 63 (223 aa).

Residues 1–22 form a disordered region; it reads MASSQQAVRETGRGRASSSSAG. Positions 1–212 constitute a PPM-type phosphatase domain; the sequence is MASSQQAVRE…RNFHVHSSHV (212 aa).

This sequence belongs to the PP2C family.

It carries out the reaction O-phospho-L-seryl-[protein] + H2O = L-seryl-[protein] + phosphate. The catalysed reaction is O-phospho-L-threonyl-[protein] + H2O = L-threonyl-[protein] + phosphate. This is Putative protein phosphatase 2C 63 from Oryza sativa subsp. japonica (Rice).